A 245-amino-acid chain; its full sequence is Geranylgeranylglyceryl phosphate synthase (245 aa).

Residues Asp22 and Ser51 each coordinate Mg(2+). Sn-glycerol 1-phosphate is bound by residues 169–175, 200–201, and 222–223; these read YLEAGSG, GG, and GT.

This sequence belongs to the GGGP/HepGP synthase family. Group II subfamily. As to quaternary structure, homopentamer. It depends on Mg(2+) as a cofactor.

The protein resides in the cytoplasm. The catalysed reaction is sn-glycerol 1-phosphate + (2E,6E,10E)-geranylgeranyl diphosphate = sn-3-O-(geranylgeranyl)glycerol 1-phosphate + diphosphate. It functions in the pathway membrane lipid metabolism; glycerophospholipid metabolism. With respect to regulation, inhibited by EDTA in vitro. In terms of biological role, prenyltransferase that catalyzes the transfer of the geranylgeranyl moiety of geranylgeranyl diphosphate (GGPP) to the C3 hydroxyl of sn-glycerol-1-phosphate (G1P). This reaction is the first ether-bond-formation step in the biosynthesis of archaeal membrane lipids. Cannot use sn-glycerol-3-phosphate (G3P) or dihydroxyacetonephosphate (DHAP) as substrate. The sequence is that of Geranylgeranylglyceryl phosphate synthase from Methanothermobacter marburgensis (strain ATCC BAA-927 / DSM 2133 / JCM 14651 / NBRC 100331 / OCM 82 / Marburg) (Methanobacterium thermoautotrophicum).